The chain runs to 388 residues: Leucine aminopeptidase 1 (388 aa).

Residues 1–19 (MRSSVLFSLYAATLVAAVA) form the signal peptide. Residues 20-88 (HPKDPQIVLQ…TLNHKLSTES (69 aa)) constitute a propeptide that is removed on maturation. N98 is a glycosylation site (N-linked (GlcNAc...) asparagine). Zn(2+) contacts are provided by H187, D206, E245, and D272. A disulfide bond links C321 and C325. H354 contacts Zn(2+).

Belongs to the peptidase M28 family. M28E subfamily. In terms of assembly, monomer. Zn(2+) serves as cofactor.

It is found in the secreted. Functionally, extracellular aminopeptidase that allows assimilation of proteinaceous substrates. This Leptosphaeria maculans (strain JN3 / isolate v23.1.3 / race Av1-4-5-6-7-8) (Blackleg fungus) protein is Leucine aminopeptidase 1 (LAP1).